The following is a 217-amino-acid chain: dITP/XTP pyrophosphatase (217 aa).

7 to 12 (SRNKKK) contributes to the substrate binding site. Catalysis depends on aspartate 72, which acts as the Proton acceptor. Residue aspartate 72 participates in Mg(2+) binding. Residues serine 73, 163 to 166 (FGYD), lysine 195, and 200 to 201 (HR) each bind substrate.

It belongs to the HAM1 NTPase family. As to quaternary structure, homodimer. Mg(2+) serves as cofactor.

The enzyme catalyses XTP + H2O = XMP + diphosphate + H(+). The catalysed reaction is dITP + H2O = dIMP + diphosphate + H(+). It catalyses the reaction ITP + H2O = IMP + diphosphate + H(+). In terms of biological role, pyrophosphatase that catalyzes the hydrolysis of nucleoside triphosphates to their monophosphate derivatives, with a high preference for the non-canonical purine nucleotides XTP (xanthosine triphosphate), dITP (deoxyinosine triphosphate) and ITP. Seems to function as a house-cleaning enzyme that removes non-canonical purine nucleotides from the nucleotide pool, thus preventing their incorporation into DNA/RNA and avoiding chromosomal lesions. The polypeptide is dITP/XTP pyrophosphatase (Corynebacterium jeikeium (strain K411)).